The chain runs to 354 residues: Rhodopsin (354 aa).

Residues 1-36 (MNGTEGPNFYVPMSNKTGVVRSPFDYPQYYLAEPWQ) lie on the Extracellular side of the membrane. Residues Asn2 and Asn15 are each glycosylated (N-linked (GlcNAc...) asparagine). The chain crosses the membrane as a helical span at residues 37-61 (YSALAAYMFLLILLGLPINFMTLFV). Residues 62–73 (TIQHKKLRTPLN) lie on the Cytoplasmic side of the membrane. A helical transmembrane segment spans residues 74 to 96 (YILLNLVFANHFMVLCGFTVTMY). Over 97-110 (TSMHGYFIFGPTGC) the chain is Extracellular. The cysteines at positions 110 and 187 are disulfide-linked. A helical transmembrane segment spans residues 111–133 (YIEGFFATLGGEVALWSLVVLAV). Positions 134-136 (ERY) match the 'Ionic lock' involved in activated form stabilization motif. Residues 134–152 (ERYIVVCKPMANFRFGENH) are Cytoplasmic-facing. A helical membrane pass occupies residues 153–173 (AIMGVAFTWIMALSCAAPPLF). Over 174–202 (GWSRYIPEGMQCSCGVDYYTLKPEVNNES) the chain is Extracellular. The helical transmembrane segment at 203 to 224 (FVIYMFIVHFTIPLIVIFFCYG) threads the bilayer. Topologically, residues 225–252 (RLLCTVKEAAAQQQESLTTQKAEKEVTR) are cytoplasmic. A helical transmembrane segment spans residues 253–274 (MVVIMVVFFLICWVPYAYVAFY). Residues 275 to 286 (IFTHQGSNFGPV) are Extracellular-facing. A helical transmembrane segment spans residues 287–308 (FMTVPAFFAKSSAIYNPVIYIV). An N6-(retinylidene)lysine modification is found at Lys296. Residues 309–354 (LNKQFRNCLITTLCCGKNPFGDEDGSSAATSKTEASSVSSSQVSPA) are Cytoplasmic-facing. 2 S-palmitoyl cysteine lipidation sites follow: Cys322 and Cys323. A disordered region spans residues 331–354 (EDGSSAATSKTEASSVSSSQVSPA). The span at 334 to 354 (SSAATSKTEASSVSSSQVSPA) shows a compositional bias: low complexity.

The protein belongs to the G-protein coupled receptor 1 family. Opsin subfamily. Post-translationally, contains one covalently linked retinal chromophore. Upon light absorption, the covalently bound 11-cis-retinal is converted to all-trans-retinal. After hydrolysis of the Schiff base and release of the covalently bound all-trans-retinal, active rhodopsin is regenerated by binding of a fresh molecule of 11-cis-retinal.

It localises to the membrane. It is found in the cell projection. The protein localises to the cilium. The protein resides in the photoreceptor outer segment. Its function is as follows. Photoreceptor required for image-forming vision at low light intensity. Required for photoreceptor cell viability after birth. Light-induced isomerization of 11-cis to all-trans retinal triggers a conformational change that activates signaling via G-proteins. Subsequent receptor phosphorylation mediates displacement of the bound G-protein alpha subunit by arrestin and terminates signaling. The polypeptide is Rhodopsin (rho) (Xenopus laevis (African clawed frog)).